The chain runs to 309 residues: Neuropeptide-like 1 (309 aa).

The signal sequence occupies residues 1–28 (MQAVLQSAHSSRRLMLLLSMLLNAAIQP). The propeptide occupies 29–99 (RSIIVSATDD…GEYPDYLEED (71 aa)). The segment at 126-147 (GQLPTAEPGEDYGDADSGEPSE) is disordered. The span at 133–144 (PGEDYGDADSGE) shows a compositional bias: acidic residues. Tyr-164 carries the post-translational modification Tyrosine amide. An Asparagine amide modification is found at Asn-182.

In terms of tissue distribution, MTYamide peptide: Expressed in the larval CNS (at protein level). NAP peptide: Expressed in the larval CNS (at protein level). IPNamide peptide: Expressed in the ventral ganglion of the third larval instar and adult brain (at protein level).

The protein resides in the secreted. In terms of biological role, acts as a ligand for the receptor-type guanylate cyclase Gyc76C. Stimulates Gyc76c-dependent cGMP production and modulates the IMD innate immune pathway in response to salt stress by inducing nuclear translocation of NF-kappa-B protein Rel which leads to increased expression of the antimicrobial peptide diptericin. Does not appear to play a role in Gyc76C-mediated wing development. In Drosophila melanogaster (Fruit fly), this protein is Neuropeptide-like 1 (Nplp1).